Reading from the N-terminus, the 232-residue chain is MATSAASSEHFEKLHEIFRGLLEDLQGVPERLLGTAGTEEKKKLVRDFDEKQQEANETLAEMEEELRYAPLTFRNSMMSKLRNYRKDLAKLHREVRSTPLTATPGGRGDLKFGTYTLENEHLNRLQSQRALLLQGTESLNRATQSIERSHRIAAETDQIGSEIIEELGEQRDQLERTKSRLVNTNENLSKSRKILRSMSRKVITNKLLLSVIIVLELAILVGLVYYKFFRHH.

Position 2 is an N-acetylalanine (A2). 2 interaction with CLINT1 regions span residues 2-23 and 69-73; these read ATSAASSEHFEKLHEIFRGLLE and APLTF. Topologically, residues 2–208 are cytoplasmic; sequence ATSAASSEHF…SRKVITNKLL (207 aa). Residues 36 to 98 are a coiled coil; sequence AGTEEKKKLV…AKLHREVRST (63 aa). A Phosphothreonine modification is found at T103. An Omega-N-methylarginine modification is found at R107. S138 carries the phosphoserine modification. Residues 160-201 adopt a coiled-coil conformation; it reads GSEIIEELGEQRDQLERTKSRLVNTNENLSKSRKILRSMSRK. Residues 209–229 traverse the membrane as a helical; Anchor for type IV membrane protein segment; that stretch reads LSVIIVLELAILVGLVYYKFF. Over 230–232 the chain is Vesicular; the sequence is RHH.

Belongs to the VTI1 family. As to quaternary structure, forms a SNARE complex with STX7, STX8 and VAMP8 which functions in the homotypic fusion of late endosomes. Component of the SNARE complex composed of STX7, STX8, VAMP7 and VIT1B that is required for heterotypic fusion of late endosomes with lysosomes. May interact with STX17. Interacts with CLINT1.

It is found in the early endosome membrane. It localises to the late endosome membrane. The protein resides in the lysosome membrane. Its subcellular location is the cytoplasmic granule. The protein localises to the recycling endosome membrane. Its function is as follows. V-SNARE that mediates vesicle transport pathways through interactions with t-SNAREs on the target membrane. These interactions are proposed to mediate aspects of the specificity of vesicle trafficking and to promote fusion of the lipid bilayers. The polypeptide is Vesicle transport through interaction with t-SNAREs homolog 1B (Vti1b) (Rattus norvegicus (Rat)).